The sequence spans 406 residues: O-glycosyltransferase PaGT (406 aa).

Residues 1 to 26 form a disordered region; sequence MSPPSQIKPPQGTTPVPPSELDPRSD.

The protein belongs to the afumC glycosyltransferase family.

Its pathway is mycotoxin biosynthesis. Functionally, O-glycosyltransferase; part of the 2 gene clusters that mediate the biosynthesis of fusicoccins, diterpene glucosides that display phytohormone-like activity and function as potent activators of plasma membrane H(+)-ATPases in plants by modifying 14-3-3 proteins and cause the plant disease constriction canker. The first step in the pathway is performed by the fusicoccadiene synthase PaFS that possesses both prenyl transferase and terpene cyclase activity, converting isopentenyl diphosphate and dimethylallyl diphosphate into geranylgeranyl diphosphate (GGDP) and successively converting GGDP into fusicocca-2,10(14)-diene, a precursor for fusicoccin H. The second step is the oxidation at the C-8 position by the cytochrome P450 monooxygenase PaP450-2 to yield fusicocca-2,10(14)-diene-8-beta-ol. The cytochrome P450 monooxygenase PaP450-1 then catalyzes the hydroxylation at the C-16 position to produce fusicocca-2,10(14)-diene-8-beta,16-diol. The dioxygenase fc-dox then catalyzes the 16-oxydation of fusicocca-2,10(14)-diene-8-beta,16-diol to yield an aldehyde (8-beta-hydroxyfusicocca-1,10(14)-dien-16-al). The short-chain dehydrogenase/reductase fc-sdr catalyzes the reduction of the aldehyde to yield fusicocca-1,10(14)-diene-8-beta,16-diol. The next step is the hydroxylation at C-9 performed by the cytochrome P450 monooxygenase PaP450-3 that leads to fusicoccin H aglycon which is glycosylated to fusicoccin H by the O-glycosyltransferase PaGT. Hydroxylation at C-12 by the cytochrome P450 monooxygenase PaP450-4 leads then to the production of fusicoccin Q and is followed by methylation by the O-methyltransferase PaMT to yield fusicoccin P. Fusicoccin P is further converted to fusicoccin J via prenylation by the O-glucose prenyltransferase PaPT. Cytochrome P450 monooxygenase PaP450-5 then performs hydroxylation at C-19 to yield dideacetyl-fusicoccin A which is acetylated to 3'-O-deacetyl-fusicoccin A by the O-acetyltransferase PaAT-2. Finally, a another acetylation by the O-acetyltransferase PaAT-1 yields fusicoccin A. The sequence is that of O-glycosyltransferase PaGT from Phomopsis amygdali (Fusicoccum amygdali).